The sequence spans 362 residues: Class I histocompatibility antigen, Gogo-OKO alpha chain (362 aa).

Residues 1 to 24 (MAVVAPRTLLLLLSGTLALTRTWA) form the signal peptide. The tract at residues 25–114 (GSHSMRYFYT…LRGYYNQSEG (90 aa)) is alpha-1. At 25–308 (GSHSMRYFYT…EPSSQPTIPI (284 aa)) the chain is on the extracellular side. Asn110 carries N-linked (GlcNAc...) asparagine glycosylation. Residues 115 to 206 (GSHTIQRMYG…ENGKETLQRT (92 aa)) are alpha-2. Intrachain disulfides connect Cys125-Cys188 and Cys227-Cys283. The segment at 207–298 (DPPKTHMTHH…GLPKPLTLRW (92 aa)) is alpha-3. An Ig-like C1-type domain is found at 209–295 (PKTHMTHHPV…QHEGLPKPLT (87 aa)). The segment at 299–308 (EPSSQPTIPI) is connecting peptide. A helical transmembrane segment spans residues 309 to 332 (VGIIAGLVLLGAVITGAVVAAMMW). At 333–362 (RKKSSGRKGGSYSQAASSDSAQGSDVSLTA) the chain is on the cytoplasmic side. The disordered stretch occupies residues 337–362 (SGRKGGSYSQAASSDSAQGSDVSLTA). Residues 342–362 (GSYSQAASSDSAQGSDVSLTA) are compositionally biased toward low complexity.

This sequence belongs to the MHC class I family. Heterodimer of an alpha chain and a beta chain (beta-2-microglobulin).

It localises to the membrane. In terms of biological role, involved in the presentation of foreign antigens to the immune system. In Gorilla gorilla gorilla (Western lowland gorilla), this protein is Class I histocompatibility antigen, Gogo-OKO alpha chain.